Reading from the N-terminus, the 380-residue chain is Autophagy protein 5 (380 aa).

A Glycyl lysine isopeptide (Lys-Gly) (interchain with G-Cter in ATG12) cross-link involves residue Lys-138. Positions 194–203 are enriched in polar residues; that stretch reads TSSVEGQQGS. 2 disordered regions span residues 194 to 214 and 283 to 309; these read TSSV…SGKP and RIPD…TPRS.

Belongs to the ATG5 family. In terms of assembly, conjugated to ATG12. Post-translationally, conjugated to ATG12; which is essential for autophagy.

The protein localises to the cytoplasm. In terms of biological role, required for autophagy. Conjugation to ATG12 is essential for plant nutrient recycling. This chain is Autophagy protein 5 (ATG5), found in Oryza sativa subsp. japonica (Rice).